We begin with the raw amino-acid sequence, 1028 residues long: Carbamoyl phosphate synthase large chain (1028 aa).

Residues 1–409 (MPPRRDLKKI…ALMKALRGLE (409 aa)) are carboxyphosphate synthetic domain. R129, R169, G175, G176, E208, V210, E215, G241, V242, H243, Q285, and E299 together coordinate ATP. Residues 133-328 (QEAMRRIDLE…IAKIAALLAV (196 aa)) enclose the ATP-grasp 1 domain. Mg(2+) contacts are provided by Q285, E299, and N301. Positions 285, 299, and 301 each coordinate Mn(2+). Residues 410-549 (RDVRALAGVR…YSTYELEDEV (140 aa)) are oligomerization domain. Residues 550-933 (WPSQKPKVVI…AYYKAELGAG (384 aa)) are carbamoyl phosphate synthetic domain. The ATP-grasp 2 domain occupies 674–866 (HALCQRLGIP…LAKLAALIAV (193 aa)). The ATP site is built by R710, R750, L752, E757, G782, V783, H784, S785, Q825, and E837. Residues Q825, E837, and N839 each coordinate Mg(2+). Residues Q825, E837, and N839 each coordinate Mn(2+). The region spanning 934–1028 (QRLPLSGQVR…QDWHQKAPRG (95 aa)) is the MGS-like domain. The allosteric domain stretch occupies residues 934–1028 (QRLPLSGQVR…QDWHQKAPRG (95 aa)).

This sequence belongs to the CarB family. As to quaternary structure, composed of two chains; the small (or glutamine) chain promotes the hydrolysis of glutamine to ammonia, which is used by the large (or ammonia) chain to synthesize carbamoyl phosphate. Tetramer of heterodimers (alpha,beta)4. The cofactor is Mg(2+). It depends on Mn(2+) as a cofactor.

It catalyses the reaction hydrogencarbonate + L-glutamine + 2 ATP + H2O = carbamoyl phosphate + L-glutamate + 2 ADP + phosphate + 2 H(+). The enzyme catalyses hydrogencarbonate + NH4(+) + 2 ATP = carbamoyl phosphate + 2 ADP + phosphate + 2 H(+). It participates in amino-acid biosynthesis; L-arginine biosynthesis; carbamoyl phosphate from bicarbonate: step 1/1. Its pathway is pyrimidine metabolism; UMP biosynthesis via de novo pathway; (S)-dihydroorotate from bicarbonate: step 1/3. Its function is as follows. Large subunit of the glutamine-dependent carbamoyl phosphate synthetase (CPSase). CPSase catalyzes the formation of carbamoyl phosphate from the ammonia moiety of glutamine, carbonate, and phosphate donated by ATP, constituting the first step of 2 biosynthetic pathways, one leading to arginine and/or urea and the other to pyrimidine nucleotides. The large subunit (synthetase) binds the substrates ammonia (free or transferred from glutamine from the small subunit), hydrogencarbonate and ATP and carries out an ATP-coupled ligase reaction, activating hydrogencarbonate by forming carboxy phosphate which reacts with ammonia to form carbamoyl phosphate. The protein is Carbamoyl phosphate synthase large chain of Thermus thermophilus (strain ATCC BAA-163 / DSM 7039 / HB27).